The sequence spans 361 residues: Phosphate acyltransferase (361 aa).

This sequence belongs to the PlsX family. As to quaternary structure, homodimer. Probably interacts with PlsY.

The protein resides in the cytoplasm. The catalysed reaction is a fatty acyl-[ACP] + phosphate = an acyl phosphate + holo-[ACP]. The protein operates within lipid metabolism; phospholipid metabolism. Its function is as follows. Catalyzes the reversible formation of acyl-phosphate (acyl-PO(4)) from acyl-[acyl-carrier-protein] (acyl-ACP). This enzyme utilizes acyl-ACP as fatty acyl donor, but not acyl-CoA. The sequence is that of Phosphate acyltransferase from Parvibaculum lavamentivorans (strain DS-1 / DSM 13023 / NCIMB 13966).